The sequence spans 748 residues: Translation factor GUF1 homolog 2, mitochondrial (748 aa).

The transit peptide at 1–29 (MRVGCCLLLKPLRQRLCTASISSRHIMRW) directs the protein to the mitochondrion. Residues 94–276 (SHIRNVAVVA…AIIERVPPPT (183 aa)) form the tr-type G domain. Residues 103–110 (AHVDHGKT), 167–171 (DTPGH), and 221–224 (TKMD) contribute to the GTP site.

This sequence belongs to the TRAFAC class translation factor GTPase superfamily. Classic translation factor GTPase family. LepA subfamily.

The protein localises to the mitochondrion inner membrane. The enzyme catalyses GTP + H2O = GDP + phosphate + H(+). Its function is as follows. Promotes mitochondrial protein synthesis. May act as a fidelity factor of the translation reaction, by catalyzing a one-codon backward translocation of tRNAs on improperly translocated ribosomes. Binds to mitochondrial ribosomes in a GTP-dependent manner. The protein is Translation factor GUF1 homolog 2, mitochondrial of Trypanosoma cruzi (strain CL Brener).